We begin with the raw amino-acid sequence, 311 residues long: Ribosomal protein L11 methyltransferase (311 aa).

S-adenosyl-L-methionine contacts are provided by Thr-163, Gly-184, Asp-206, and Asn-248.

The protein belongs to the methyltransferase superfamily. PrmA family.

It localises to the cytoplasm. The catalysed reaction is L-lysyl-[protein] + 3 S-adenosyl-L-methionine = N(6),N(6),N(6)-trimethyl-L-lysyl-[protein] + 3 S-adenosyl-L-homocysteine + 3 H(+). Methylates ribosomal protein L11. The sequence is that of Ribosomal protein L11 methyltransferase from Clostridium acetobutylicum (strain ATCC 824 / DSM 792 / JCM 1419 / IAM 19013 / LMG 5710 / NBRC 13948 / NRRL B-527 / VKM B-1787 / 2291 / W).